Consider the following 344-residue polypeptide: Dihydroorotase (344 aa).

2 residues coordinate Zn(2+): His-13 and His-15. Substrate is bound by residues 15 to 17 and Asn-41; that span reads HLR. The Zn(2+) site is built by Lys-98, His-135, and His-173. Lys-98 is subject to N6-carboxylysine. His-135 is a substrate binding site. Leu-218 lines the substrate pocket. Position 247 (Asp-247) interacts with Zn(2+). Asp-247 is a catalytic residue. Substrate contacts are provided by His-251 and Ala-263.

The protein belongs to the metallo-dependent hydrolases superfamily. DHOase family. Class II DHOase subfamily. Homodimer. Zn(2+) serves as cofactor.

It carries out the reaction (S)-dihydroorotate + H2O = N-carbamoyl-L-aspartate + H(+). The protein operates within pyrimidine metabolism; UMP biosynthesis via de novo pathway; (S)-dihydroorotate from bicarbonate: step 3/3. Catalyzes the reversible cyclization of carbamoyl aspartate to dihydroorotate. In Neisseria gonorrhoeae (strain NCCP11945), this protein is Dihydroorotase.